Here is a 298-residue protein sequence, read N- to C-terminus: N-acetylmuramic acid 6-phosphate etherase (298 aa).

The 164-residue stretch at Thr54–Lys217 folds into the SIS domain. Catalysis depends on Glu82, which acts as the Proton donor. Glu113 is a catalytic residue.

This sequence belongs to the GCKR-like family. MurNAc-6-P etherase subfamily. Homodimer.

The catalysed reaction is N-acetyl-D-muramate 6-phosphate + H2O = N-acetyl-D-glucosamine 6-phosphate + (R)-lactate. It functions in the pathway amino-sugar metabolism; N-acetylmuramate degradation. In terms of biological role, specifically catalyzes the cleavage of the D-lactyl ether substituent of MurNAc 6-phosphate, producing GlcNAc 6-phosphate and D-lactate. The protein is N-acetylmuramic acid 6-phosphate etherase of Halalkalibacterium halodurans (strain ATCC BAA-125 / DSM 18197 / FERM 7344 / JCM 9153 / C-125) (Bacillus halodurans).